A 286-amino-acid chain; its full sequence is MSDAIQRVGVVGAGQMGSGIAEVSARAGVEVTVFEPAEALITAGRNRIVKSLERAVSAGKVTERERDRALGLLTFTTDLNDLSDRQLVIEAVVEDEAVKSEIFAELDRVVTDPDAVLASNTSSIPIMKVAAATKQPQRVLGLHFFNPVPVLPLVELVRTLVTDEAAAARTEEFASTVLGKQVVRCSDRSGFVVNALLVPYLLSAIRMVEAGFATVEDVDKAVVAGLSHPMGPLRLSDLVGLDTLKLIADKMFEEFKEPHYGPPPLLLRMVEAGQLGKKSGRGFYTY.

The protein belongs to the 3-hydroxyacyl-CoA dehydrogenase family.

It catalyses the reaction 3-hydroxybutanoyl-CoA + NAD(+) = acetoacetyl-CoA + NADH + H(+). It carries out the reaction (3S)-3-hydroxybutanoyl-CoA + NADP(+) = acetoacetyl-CoA + NADPH + H(+). Its pathway is lipid metabolism; butanoate metabolism. This is 3-hydroxybutyryl-CoA dehydrogenase (fadB2) from Mycobacterium tuberculosis (strain CDC 1551 / Oshkosh).